Here is a 233-residue protein sequence, read N- to C-terminus: ATP-dependent dethiobiotin synthetase BioD (233 aa).

12–17 (EVGKTY) contacts ATP. T16 provides a ligand contact to Mg(2+). K37 is a catalytic residue. Residues D54, 120–123 (EGAG), and 186–187 (ND) each bind ATP. D54 and E120 together coordinate Mg(2+).

The protein belongs to the dethiobiotin synthetase family. Homodimer. It depends on Mg(2+) as a cofactor.

It localises to the cytoplasm. It carries out the reaction (7R,8S)-7,8-diammoniononanoate + CO2 + ATP = (4R,5S)-dethiobiotin + ADP + phosphate + 3 H(+). Its pathway is cofactor biosynthesis; biotin biosynthesis; biotin from 7,8-diaminononanoate: step 1/2. Catalyzes a mechanistically unusual reaction, the ATP-dependent insertion of CO2 between the N7 and N8 nitrogen atoms of 7,8-diaminopelargonic acid (DAPA, also called 7,8-diammoniononanoate) to form a ureido ring. This is ATP-dependent dethiobiotin synthetase BioD from Alteromonas mediterranea (strain DSM 17117 / CIP 110805 / LMG 28347 / Deep ecotype).